Reading from the N-terminus, the 382-residue chain is Protein phosphatase 1A (382 aa).

The N-myristoyl glycine moiety is linked to residue glycine 2. Residues 23–291 (RYGLSSMQGW…DNMSVILICF (269 aa)) form the PPM-type phosphatase domain. Residues aspartate 60, glycine 61, aspartate 239, and aspartate 282 each contribute to the Mn(2+) site. Serine 375 and serine 377 each carry phosphoserine.

It belongs to the PP2C family. As to quaternary structure, monomer. Interacts with SMAD2; the interaction dephosphorylates SMAD2 in its C-terminal SXS motif resulting in disruption of the SMAD2/SMAD4 complex, SMAD2 nuclear export and termination of the TGF-beta-mediated signaling. Interacts with SMAD2; the interaction dephosphorylates SMAD2 in its C-terminal SXS motif resulting in disruption of the SMAD2/SMAD4 complex, SMAD2 nuclear export and termination of the TGF-beta-mediated signaling. Interacts with the phosphorylated form of IKBKB/IKKB. Mg(2+) is required as a cofactor. The cofactor is Mn(2+). N-myristoylation is essential for the recognition of its substrates for dephosphorylation.

It localises to the nucleus. It is found in the cytoplasm. The protein localises to the cytosol. Its subcellular location is the membrane. It catalyses the reaction O-phospho-L-seryl-[protein] + H2O = L-seryl-[protein] + phosphate. It carries out the reaction O-phospho-L-threonyl-[protein] + H2O = L-threonyl-[protein] + phosphate. In terms of biological role, enzyme with a broad specificity. Negatively regulates TGF-beta signaling through dephosphorylating SMAD2 and SMAD3, resulting in their dissociation from SMAD4, nuclear export of the SMADs and termination of the TGF-beta-mediated signaling. Dephosphorylates PRKAA1 and PRKAA2. Plays an important role in the termination of TNF-alpha-mediated NF-kappa-B activation through dephosphorylating and inactivating IKBKB/IKKB. In Mus musculus (Mouse), this protein is Protein phosphatase 1A (Ppm1a).